The chain runs to 278 residues: Small ribosomal subunit protein uS3 (278 aa).

The region spanning 39 to 107 is the KH type-2 domain; sequence LRKAISKKYV…KVQLNIVEIS (69 aa). The interval 255–278 is disordered; that stretch reads AEIPAEEKPKRVVKKAENITKEEE.

This sequence belongs to the universal ribosomal protein uS3 family. Part of the 30S ribosomal subunit. Forms a tight complex with proteins S10 and S14.

Its function is as follows. Binds the lower part of the 30S subunit head. Binds mRNA in the 70S ribosome, positioning it for translation. This Dehalococcoides mccartyi (strain CBDB1) protein is Small ribosomal subunit protein uS3.